A 174-amino-acid chain; its full sequence is Secretion monitor (174 aa).

A signal peptide spans Met-1 to Ala-35.

The protein belongs to the SecM family.

The protein localises to the cytoplasm. The protein resides in the cytosol. Its subcellular location is the periplasm. Functionally, regulates secA expression by translational coupling of the secM secA operon. Translational pausing at a specific Pro residue 5 residues before the end of the protein may allow disruption of a mRNA repressor helix that normally suppresses secA translation initiation. The chain is Secretion monitor from Photorhabdus laumondii subsp. laumondii (strain DSM 15139 / CIP 105565 / TT01) (Photorhabdus luminescens subsp. laumondii).